A 699-amino-acid chain; its full sequence is MSKINKLEHIRNIGICAHIDAGKTTTTERILYYTGKSHKIGEVHEGGATMDWMEQEQERGITITSAATTCRWQDKIINIIDTPGHVDFTIEVERSLRVLDGAVAVFDGVAGVEPQSETVWRQADKYNVPRMCFVNKMDRMGADFYRCVEMLKDRLGAKPLVIQLPVGIEENFKGIIDLIKMKAVIWKDEALGAEYFEEDIPADMKDKAEEYRAKLLDMVVELDDHVMEKYLSGEEVTAEEIKRLIRKGTISAAFYPVLCGSAFKNKGVQPLLDAVVDFLPSPIDIGIVKGMEVSTGAEKDFPISVTEPFAALAFKIMNDPFVGSLTFIRIYSGKITSGTTVINTVKNKREKIGRMLLMHANNREDVKEASAGDIVALAGLKDTTTGDTLSDIDQQVILERMEFPEPVIELAVEPKSTADQEKMGLALSRLAAEDPSFRVSTDYETGQTVIKGMGELHLEIIIDRMRREFKVEANIGAPQVAYRETITKVCEIDYTHKKQSGGAGQFARVKIIFEPLKEVKDLKDEDKNKNFVFESKIIGGAVPKEYIPGVEKGLNNIRETGVIAGYPMIDFKATLVDGAFHDVDSSVLAFEIAAKAAFREGMPKGNPKLLEPIMQVEVITPDEYMGDIIGDLNSRRGQIQSMDPRGNAQVVTANVPLAEMFGYVNTLRSLSQGRAQFSMIFSHYDQVPSQVADIIKAKK.

One can recognise a tr-type G domain in the interval 8 to 283 (EHIRNIGICA…AVVDFLPSPI (276 aa)). GTP is bound by residues 17-24 (AHIDAGKT), 81-85 (DTPGH), and 135-138 (NKMD).

The protein belongs to the TRAFAC class translation factor GTPase superfamily. Classic translation factor GTPase family. EF-G/EF-2 subfamily.

It localises to the cytoplasm. In terms of biological role, catalyzes the GTP-dependent ribosomal translocation step during translation elongation. During this step, the ribosome changes from the pre-translocational (PRE) to the post-translocational (POST) state as the newly formed A-site-bound peptidyl-tRNA and P-site-bound deacylated tRNA move to the P and E sites, respectively. Catalyzes the coordinated movement of the two tRNA molecules, the mRNA and conformational changes in the ribosome. This chain is Elongation factor G, found in Rickettsia sibirica (strain ATCC VR-151 / 246).